The primary structure comprises 488 residues: Altronate oxidoreductase (488 aa).

18 to 29 (VIQFGEGNFLRA) is an NAD(+) binding site.

This sequence belongs to the mannitol dehydrogenase family. UxaB subfamily.

The catalysed reaction is D-altronate + NAD(+) = keto-D-tagaturonate + NADH + H(+). It participates in carbohydrate metabolism; pentose and glucuronate interconversion. The polypeptide is Altronate oxidoreductase (Pectobacterium carotovorum subsp. carotovorum (strain PC1)).